We begin with the raw amino-acid sequence, 473 residues long: Photosystem II CP43 reaction center protein (473 aa).

Positions 1 to 14 (MKTLYSLRRFYHVE) are excised as a propeptide. The residue at position 15 (threonine 15) is an N-acetylthreonine. Threonine 15 carries the phosphothreonine modification. Helical transmembrane passes span 69-93 (LFEVAHFVPEKPMYEQGLILLPHLA), 134-155 (LIGPETLEESFPFFGYVWKDKN), 178-200 (KAVWFGGVYDTWAPGGGDVRKIT), 255-275 (KPFAWARRAFIWSGEAYLSYS), and 291-312 (WFNNTAYPSEFYGPTGPEASQA). [CaMn4O5] cluster is bound at residue glutamate 367. The chain crosses the membrane as a helical span at residues 447-471 (RARAAAAGFEKGIDRETEPVFFMNP).

Belongs to the PsbB/PsbC family. PsbC subfamily. In terms of assembly, PSII is composed of 1 copy each of membrane proteins PsbA, PsbB, PsbC, PsbD, PsbE, PsbF, PsbH, PsbI, PsbJ, PsbK, PsbL, PsbM, PsbT, PsbX, PsbY, PsbZ, Psb30/Ycf12, at least 3 peripheral proteins of the oxygen-evolving complex and a large number of cofactors. It forms dimeric complexes. Requires Binds multiple chlorophylls and provides some of the ligands for the Ca-4Mn-5O cluster of the oxygen-evolving complex. It may also provide a ligand for a Cl- that is required for oxygen evolution. PSII binds additional chlorophylls, carotenoids and specific lipids. as cofactor.

The protein localises to the plastid. The protein resides in the chloroplast thylakoid membrane. Functionally, one of the components of the core complex of photosystem II (PSII). It binds chlorophyll and helps catalyze the primary light-induced photochemical processes of PSII. PSII is a light-driven water:plastoquinone oxidoreductase, using light energy to abstract electrons from H(2)O, generating O(2) and a proton gradient subsequently used for ATP formation. The polypeptide is Photosystem II CP43 reaction center protein (Staurastrum punctulatum (Green alga)).